We begin with the raw amino-acid sequence, 476 residues long: Ubiquinone biosynthesis monooxygenase COQ6, mitochondrial (476 aa).

The N-terminal 42 residues, 1 to 42 (MAARIGPMAGLLCVRWWSTAQLAARGGPLVACRRWTSSSTDS), are a transit peptide targeting the mitochondrion.

It belongs to the UbiH/COQ6 family. Component of a multi-subunit COQ enzyme complex, composed of at least COQ3, COQ4, COQ5, COQ6, COQ7 and COQ9. Interacts with COQ8B and COQ7. The cofactor is FAD. In the kidney, expressed almost exclusively in glomerular podocytes. In the inner ear, expressed in the spiral ganglion, as well as in stria vascularis and spiral ligament cells.

It localises to the mitochondrion inner membrane. Its subcellular location is the golgi apparatus. The protein localises to the cell projection. The enzyme catalyses 4-hydroxy-3-(all-trans-decaprenyl)benzoate + 2 reduced [2Fe-2S]-[ferredoxin] + O2 + 2 H(+) = 3,4-dihydroxy-5-(all-trans-decaprenyl)benzoate + 2 oxidized [2Fe-2S]-[ferredoxin] + H2O. It carries out the reaction 2-methoxy-6-(all-trans-decaprenyl)phenol + 2 reduced [2Fe-2S]-[ferredoxin] + O2 + 2 H(+) = 2-methoxy-6-(all-trans-decaprenyl)benzene-1,4-diol + 2 oxidized [2Fe-2S]-[ferredoxin] + H2O. It functions in the pathway cofactor biosynthesis; ubiquinone biosynthesis. Functionally, FAD-dependent monooxygenase required for two non-consecutive steps during ubiquinone biosynthesis. Required for the C5-ring hydroxylation during ubiquinone biosynthesis by catalyzing the hydroxylation of 4-hydroxy-3-(all-trans-decaprenyl)benzoic acid to 3,4-dihydroxy-5-(all-trans-decaprenyl)benzoic acid. Also acts downstream of COQ4, for the C1-hydroxylation during ubiquinone biosynthesis by catalyzing the hydroxylation of 2-methoxy-6-(all-trans-decaprenyl)phenol to 2-methoxy-6-(all-trans-decaprenyl)benzene-1,4-diol. The electrons required for the hydroxylation reaction are funneled indirectly to COQ6 from NADPH via a ferredoxin/ferredoxin reductase system composed of FDX2 and FDXR. This is Ubiquinone biosynthesis monooxygenase COQ6, mitochondrial from Rattus norvegicus (Rat).